Consider the following 269-residue polypeptide: MPELPEVETSRRGISPYLVGHTILYAEVRNARLRWPVSAEILSLSDEPVLSVRRRAKYLLIELTHGWIIVHLGMSGSLRILPEYSEPEKHDHVDLVMDSGKVLRYTDPRRFGAWLWTDSLETSSVLAHLGPEPLEAEFFADYLYQASRGKKTAIKQWIMDNKVVVGVGNIYASESLFAAGIHPDRAAGSLNENDADVLVRVIKQVLQLSIEQGGTTLRDFLQSDGKPGYFAQELRVYGRNGEPCRTCGTPIETAKHGQRSTFFCRRCQV.

The active-site Schiff-base intermediate with DNA is P2. Catalysis depends on E3, which acts as the Proton donor. Residue K57 is the Proton donor; for beta-elimination activity of the active site. DNA contacts are provided by H90, R109, and K150. The FPG-type zinc finger occupies 235–269 (RVYGRNGEPCRTCGTPIETAKHGQRSTFFCRRCQV). The active-site Proton donor; for delta-elimination activity is R259.

This sequence belongs to the FPG family. As to quaternary structure, monomer. Zn(2+) serves as cofactor.

The catalysed reaction is Hydrolysis of DNA containing ring-opened 7-methylguanine residues, releasing 2,6-diamino-4-hydroxy-5-(N-methyl)formamidopyrimidine.. It carries out the reaction 2'-deoxyribonucleotide-(2'-deoxyribose 5'-phosphate)-2'-deoxyribonucleotide-DNA = a 3'-end 2'-deoxyribonucleotide-(2,3-dehydro-2,3-deoxyribose 5'-phosphate)-DNA + a 5'-end 5'-phospho-2'-deoxyribonucleoside-DNA + H(+). Its function is as follows. Involved in base excision repair of DNA damaged by oxidation or by mutagenic agents. Acts as a DNA glycosylase that recognizes and removes damaged bases. Has a preference for oxidized purines, such as 7,8-dihydro-8-oxoguanine (8-oxoG). Has AP (apurinic/apyrimidinic) lyase activity and introduces nicks in the DNA strand. Cleaves the DNA backbone by beta-delta elimination to generate a single-strand break at the site of the removed base with both 3'- and 5'-phosphates. In Pectobacterium atrosepticum (strain SCRI 1043 / ATCC BAA-672) (Erwinia carotovora subsp. atroseptica), this protein is Formamidopyrimidine-DNA glycosylase.